A 979-amino-acid polypeptide reads, in one-letter code: Calsyntenin-1 (979 aa).

Residues 1-28 (MLRRPAPALAPAVRLLLAGLLCGGGVWA) form the signal peptide. The Extracellular segment spans residues 29-859 (ARVNKHKPWL…PHPFAVVPST (831 aa)). 2 Cadherin domains span residues 38–164 (LEPT…APVF) and 165–265 (KEKS…SPGW). N-linked (GlcNAc...) asparagine glycosylation is found at N346, N366, and N515. Residues 860 to 880 (ATVVIVVCVSFLVFMIILGVF) traverse the membrane as a helical segment. Residues 881–979 (RIRAAHQRTM…LEWDDSTLSY (99 aa)) lie on the Cytoplasmic side of the membrane. The disordered stretch occupies residues 915–979 (METYEDQHSS…LEWDDSTLSY (65 aa)). Acidic residues predominate over residues 925–959 (EEEEEEEEEEESEDGEEEEDITSAESESSEEEEGG).

Belongs to the calsyntenin family. In terms of assembly, directly interacts with APBA2. Forms a tripartite complex with APBA2 and APP. The CTF1 chain interacts with PSEN1. Interacts with KLC1 and APBB1. As to quaternary structure, interacts with APBB1; this interaction stabilizes AlcICD metabolism. Interacts with PSEN1. Proteolytically processed under normal cellular conditions. A primary zeta-cleavage generates a large extracellular (soluble) N-terminal domain (sAlc) and a short C-terminal transmembrane fragment (CTF1). A secondary cleavage catalyzed by presenilin gamma-secretase within the transmembrane domain releases the beta-Alc-alpha chain in the extracellular milieu and produces an intracellular fragment (AlcICD). Beta-Alc-alpha secretion is largely dependent upon PSEN1 and PSEN2. This processing is strongly suppressed in the tripartite complex formed with APBA2 and APP, which seems to prevent the association with PSEN1. In terms of tissue distribution, highly expressed in the brain (at protein level), with over 90% of the neurons expressing detectable amounts. In the brain, relatively high levels in the cerebral cortex, striatum, hippocampus and thalamus. Moderate levels in the cerebellum. Low levels in the olfactory bulb, midbrain and pons (at protein level). Not detected in Purkinje cells. Expressed at low levels in the lung (at protein level). At the mRNA level, weakly detected in the kidney, lung, skeletal muscle, heart and testis. Not expressed in the sciatic nerve fiber.

Its subcellular location is the postsynaptic cell membrane. The protein localises to the endoplasmic reticulum membrane. It is found in the golgi apparatus membrane. The protein resides in the cell projection. It localises to the neuron projection. Its subcellular location is the vesicle. The protein localises to the nucleus. Its function is as follows. Postsynaptic adhesion molecule that binds to presynaptic neurexins to mediate both excitatory and inhibitory synapse formation. Promotes synapse development by acting as a cell adhesion molecule at the postsynaptic membrane, which associates with neurexin-alpha at the presynaptic membrane. Also functions as a cargo in axonal anterograde transport by acting as a molecular adapter that promotes KLC1 association with vesicles. Complex formation with APBA2 and APP, stabilizes APP metabolism and enhances APBA2-mediated suppression of beta-APP40 secretion, due to the retardation of intracellular APP maturation. As intracellular fragment AlcICD, suppresses APBB1-dependent transactivation stimulated by APP C-terminal intracellular fragment (AICD), most probably by competing with AICD for APBB1-binding. Functionally, in complex with APBA2 and C99, a C-terminal APP fragment, abolishes C99 interaction with PSEN1 and thus APP C99 cleavage by gamma-secretase, most probably through stabilization of the direct interaction between APBA2 and APP. The polypeptide is Calsyntenin-1 (Mus musculus (Mouse)).